Reading from the N-terminus, the 389-residue chain is Large envelope protein (389 aa).

M1 is subject to N-acetylmethionine. Residue G2 is the site of N-myristoyl glycine; by host attachment. The segment at 2–108 (GQNLSVTNPL…PPLRDTHPQA (107 aa)) is pre-S1. The pre-S stretch occupies residues 2 to 163 (GQNLSVTNPL…FLKTGDPALN (162 aa)). The Virion surface; in external conformation portion of the chain corresponds to 2–170 (GQNLSVTNPL…ALNMESISSG (169 aa)). At 2-242 (GQNLSVTNPL…PGYRWMCLRR (241 aa)) the chain is on the intravirion; in internal conformation side. A disordered region spans residues 78 to 105 (PAVPPPASTNRQSGRRPTPISPPLRDTH). The segment at 109-163 (MQWNSTVFHQALQDPRVRGLYFPAGGSSSGTVSPVPTTASPISSTFLKTGDPALN) is pre-S2. Residues 171-191 (FLGPLLVLQAGFFLLTKILTI) form a helical membrane-spanning segment. Residues 192 to 242 (PQSLDSWWTSLNFLGGAPVCPGQNSQSLTSNHSPTSCPPICPGYRWMCLRR) are Intravirion; in external conformation-facing. A helical membrane pass occupies residues 243–263 (FIIFLFILLLCLIFLLVLLDY). Over 264-337 (RGMLPVCPLL…WASVRFSWLN (74 aa)) the chain is Virion surface. An N-linked (GlcNAc...) asparagine; by host glycan is attached at N309. Residues 338-358 (LLVPFVQWFAGLSPTVWLSVI) form a helical membrane-spanning segment. At 359–364 (WMIWYW) the chain is on the intravirion side. Residues 365–387 (GPSLYNILSPFIPLLPIFFCLWA) traverse the membrane as a helical segment. At 388–389 (YI) the chain is on the virion surface side.

The protein belongs to the orthohepadnavirus major surface antigen family. In its internal form (Li-HBsAg), interacts with the capsid protein and with the isoform S. Interacts with host chaperone CANX. As to quaternary structure, associates with host chaperone CANX through its pre-S2 N glycan; this association may be essential for isoform M proper secretion. In terms of assembly, interacts with isoform L. Interacts with the antigens of satellite virus HDV (HDVAgs); this interaction is required for encapsidation of HDV genomic RNA. Post-translationally, isoform M is N-terminally acetylated by host at a ratio of 90%, and N-glycosylated by host at the pre-S2 region. In terms of processing, myristoylated.

The protein resides in the virion membrane. In terms of biological role, the large envelope protein exists in two topological conformations, one which is termed 'external' or Le-HBsAg and the other 'internal' or Li-HBsAg. In its external conformation the protein attaches the virus to cell receptors and thereby initiating infection. This interaction determines the species specificity and liver tropism. This attachment induces virion internalization predominantly through caveolin-mediated endocytosis. The large envelope protein also assures fusion between virion membrane and endosomal membrane. In its internal conformation the protein plays a role in virion morphogenesis and mediates the contact with the nucleocapsid like a matrix protein. Functionally, the middle envelope protein plays an important role in the budding of the virion. It is involved in the induction of budding in a nucleocapsid independent way. In this process the majority of envelope proteins bud to form subviral lipoprotein particles of 22 nm of diameter that do not contain a nucleocapsid. The polypeptide is Large envelope protein (Pongo pygmaeus (Bornean orangutan)).